The following is an 86-amino-acid chain: uncharacterized protein (86 aa).

To B.subtilis spore coat protein C.

This is an uncharacterized protein from Bacillus subtilis (strain 168).